The chain runs to 292 residues: NAD kinase (292 aa).

Catalysis depends on D73, which acts as the Proton acceptor. NAD(+) is bound by residues 73-74 (DG), 147-148 (NE), H158, R175, D177, 188-193 (TAYSLS), and Q247.

The protein belongs to the NAD kinase family. It depends on a divalent metal cation as a cofactor.

Its subcellular location is the cytoplasm. The enzyme catalyses NAD(+) + ATP = ADP + NADP(+) + H(+). Functionally, involved in the regulation of the intracellular balance of NAD and NADP, and is a key enzyme in the biosynthesis of NADP. Catalyzes specifically the phosphorylation on 2'-hydroxyl of the adenosine moiety of NAD to yield NADP. The chain is NAD kinase from Escherichia coli O157:H7.